The sequence spans 292 residues: ATP phosphoribosyltransferase (292 aa).

The protein belongs to the ATP phosphoribosyltransferase family. Long subfamily. It depends on Mg(2+) as a cofactor.

Its subcellular location is the cytoplasm. The catalysed reaction is 1-(5-phospho-beta-D-ribosyl)-ATP + diphosphate = 5-phospho-alpha-D-ribose 1-diphosphate + ATP. It participates in amino-acid biosynthesis; L-histidine biosynthesis; L-histidine from 5-phospho-alpha-D-ribose 1-diphosphate: step 1/9. With respect to regulation, feedback inhibited by histidine. In terms of biological role, catalyzes the condensation of ATP and 5-phosphoribose 1-diphosphate to form N'-(5'-phosphoribosyl)-ATP (PR-ATP). Has a crucial role in the pathway because the rate of histidine biosynthesis seems to be controlled primarily by regulation of HisG enzymatic activity. The sequence is that of ATP phosphoribosyltransferase from Gemmatimonas aurantiaca (strain DSM 14586 / JCM 11422 / NBRC 100505 / T-27).